The chain runs to 476 residues: Aspartyl/glutamyl-tRNA(Asn/Gln) amidotransferase subunit B 1 (476 aa).

Belongs to the GatB/GatE family. GatB subfamily. As to quaternary structure, heterotrimer of A, B and C subunits.

The catalysed reaction is L-glutamyl-tRNA(Gln) + L-glutamine + ATP + H2O = L-glutaminyl-tRNA(Gln) + L-glutamate + ADP + phosphate + H(+). It catalyses the reaction L-aspartyl-tRNA(Asn) + L-glutamine + ATP + H2O = L-asparaginyl-tRNA(Asn) + L-glutamate + ADP + phosphate + 2 H(+). In terms of biological role, allows the formation of correctly charged Asn-tRNA(Asn) or Gln-tRNA(Gln) through the transamidation of misacylated Asp-tRNA(Asn) or Glu-tRNA(Gln) in organisms which lack either or both of asparaginyl-tRNA or glutaminyl-tRNA synthetases. The reaction takes place in the presence of glutamine and ATP through an activated phospho-Asp-tRNA(Asn) or phospho-Glu-tRNA(Gln). This chain is Aspartyl/glutamyl-tRNA(Asn/Gln) amidotransferase subunit B 1 (gatB1), found in Clostridium acetobutylicum (strain ATCC 824 / DSM 792 / JCM 1419 / IAM 19013 / LMG 5710 / NBRC 13948 / NRRL B-527 / VKM B-1787 / 2291 / W).